We begin with the raw amino-acid sequence, 527 residues long: Probable guanine deaminase (527 aa).

Residues H79 and H81 each contribute to the Zn(2+) site. Substrate contacts are provided by residues 81 to 84 (HAPQ), 212 to 213 (RF), 239 to 242 (HISE), and D329. Zn(2+) contacts are provided by H239 and D329.

The protein belongs to the metallo-dependent hydrolases superfamily. ATZ/TRZ family. Requires Zn(2+) as cofactor.

It catalyses the reaction guanine + H2O + H(+) = xanthine + NH4(+). Its pathway is purine metabolism; guanine degradation; xanthine from guanine: step 1/1. Catalyzes the hydrolytic deamination of guanine, producing xanthine and ammonia. In Schizosaccharomyces pombe (strain 972 / ATCC 24843) (Fission yeast), this protein is Probable guanine deaminase.